A 516-amino-acid polypeptide reads, in one-letter code: Probable metalloreductase AIM14 (516 aa).

7 helical membrane passes run I18–L38, L64–I84, L97–S117, H128–I148, L168–I188, S195–A215, and P217–A237. The Ferric oxidoreductase domain occupies L94–I207. An FAD-binding FR-type domain is found at R238–P363.

The protein belongs to the ferric reductase (FRE) family. AIM14 subfamily.

The protein resides in the membrane. Its function is as follows. Probable cell surface metalloreductase. May be involved in iron or copper homeostasis. The chain is Probable metalloreductase AIM14 (AIM14) from Eremothecium gossypii (strain ATCC 10895 / CBS 109.51 / FGSC 9923 / NRRL Y-1056) (Yeast).